A 247-amino-acid polypeptide reads, in one-letter code: tRNA pseudouridine synthase A (247 aa).

Residue D52 is the Nucleophile of the active site. Y113 serves as a coordination point for substrate.

The protein belongs to the tRNA pseudouridine synthase TruA family. Homodimer.

It catalyses the reaction uridine(38/39/40) in tRNA = pseudouridine(38/39/40) in tRNA. Its function is as follows. Formation of pseudouridine at positions 38, 39 and 40 in the anticodon stem and loop of transfer RNAs. In Rhizobium meliloti (strain 1021) (Ensifer meliloti), this protein is tRNA pseudouridine synthase A.